The chain runs to 149 residues: Large ribosomal subunit protein bL9 (149 aa).

It belongs to the bacterial ribosomal protein bL9 family.

Functionally, binds to the 23S rRNA. This Anaeromyxobacter dehalogenans (strain 2CP-C) protein is Large ribosomal subunit protein bL9.